The sequence spans 133 residues: MAANDTIADMLTRIRNANMARHQTTLVPATKMTRSIAKVLQEEGFIAEISEEGDEVKRNLVIALKYKGKNRQPLITALKRVSKPGLRVYSNRKELPRVLGGIGIAIISTSSGIMTDREARRQNLGGEVLCYVW.

The protein belongs to the universal ribosomal protein uS8 family. Part of the 30S ribosomal subunit. Contacts proteins S5 and S12.

Functionally, one of the primary rRNA binding proteins, it binds directly to 16S rRNA central domain where it helps coordinate assembly of the platform of the 30S subunit. The protein is Small ribosomal subunit protein uS8 of Trichormus variabilis (strain ATCC 29413 / PCC 7937) (Anabaena variabilis).